Reading from the N-terminus, the 224-residue chain is Phosphoribosylformylglycinamidine synthase subunit PurQ (224 aa).

Residues 2-224 (TVAIIRFGGS…DGQGVLEGFR (223 aa)) enclose the Glutamine amidotransferase type-1 domain. Cys-85 acts as the Nucleophile in catalysis. Residues His-202 and Glu-204 contribute to the active site. The interval 204–224 (ERASLPDIGPTDGQGVLEGFR) is disordered.

As to quaternary structure, part of the FGAM synthase complex composed of 1 PurL, 1 PurQ and 2 PurS subunits.

The protein resides in the cytoplasm. The enzyme catalyses N(2)-formyl-N(1)-(5-phospho-beta-D-ribosyl)glycinamide + L-glutamine + ATP + H2O = 2-formamido-N(1)-(5-O-phospho-beta-D-ribosyl)acetamidine + L-glutamate + ADP + phosphate + H(+). It catalyses the reaction L-glutamine + H2O = L-glutamate + NH4(+). It participates in purine metabolism; IMP biosynthesis via de novo pathway; 5-amino-1-(5-phospho-D-ribosyl)imidazole from N(2)-formyl-N(1)-(5-phospho-D-ribosyl)glycinamide: step 1/2. In terms of biological role, part of the phosphoribosylformylglycinamidine synthase complex involved in the purines biosynthetic pathway. Catalyzes the ATP-dependent conversion of formylglycinamide ribonucleotide (FGAR) and glutamine to yield formylglycinamidine ribonucleotide (FGAM) and glutamate. The FGAM synthase complex is composed of three subunits. PurQ produces an ammonia molecule by converting glutamine to glutamate. PurL transfers the ammonia molecule to FGAR to form FGAM in an ATP-dependent manner. PurS interacts with PurQ and PurL and is thought to assist in the transfer of the ammonia molecule from PurQ to PurL. In Natronomonas pharaonis (strain ATCC 35678 / DSM 2160 / CIP 103997 / JCM 8858 / NBRC 14720 / NCIMB 2260 / Gabara) (Halobacterium pharaonis), this protein is Phosphoribosylformylglycinamidine synthase subunit PurQ.